A 563-amino-acid polypeptide reads, in one-letter code: Merozoite receptor PK66 (563 aa).

The N-terminal stretch at 1 to 13 (MNKIYYILFLSAQ) is a signal peptide. The Extracellular segment spans residues 14-487 (CLVHMGKCER…DGKHKKKMLL (474 aa)). 6 N-linked (GlcNAc...) asparagine glycosylation sites follow: asparagine 36, asparagine 107, asparagine 176, asparagine 189, asparagine 238, and asparagine 441. The helical transmembrane segment at 488–508 (IIIGVTGAVCVVAVASLFYFR) threads the bilayer. Residues 509–563 (KKAQDDKYDKMDQAEAYGKTANTRKDEMLDPEASFWGEDKRASHTTPVLMEKPYY) are Cytoplasmic-facing.

It belongs to the apicomplexan parasites AMA1 family.

Its subcellular location is the membrane. Its function is as follows. Merozoite receptor PK66 is a surface antigen involved in parasite invasion of erythrocytes. The chain is Merozoite receptor PK66 (PK66) from Plasmodium knowlesi (strain nuri).